A 113-amino-acid polypeptide reads, in one-letter code: Protein PucD (113 aa).

Its function is as follows. Seems to be required for the LH-II stabilization. This is Protein PucD (pucD) from Rhodobacter capsulatus (Rhodopseudomonas capsulata).